We begin with the raw amino-acid sequence, 98 residues long: NADH-ubiquinone oxidoreductase chain 4L (98 aa).

A run of 3 helical transmembrane segments spans residues 1 to 21, 29 to 49, and 61 to 81; these read MTLI…GLLM, ALLC…LTIL, and IILL…LVMV.

It belongs to the complex I subunit 4L family. Core subunit of respiratory chain NADH dehydrogenase (Complex I) which is composed of 45 different subunits.

The protein localises to the mitochondrion inner membrane. It catalyses the reaction a ubiquinone + NADH + 5 H(+)(in) = a ubiquinol + NAD(+) + 4 H(+)(out). Its function is as follows. Core subunit of the mitochondrial membrane respiratory chain NADH dehydrogenase (Complex I) which catalyzes electron transfer from NADH through the respiratory chain, using ubiquinone as an electron acceptor. Part of the enzyme membrane arm which is embedded in the lipid bilayer and involved in proton translocation. The sequence is that of NADH-ubiquinone oxidoreductase chain 4L (MT-ND4L) from Balaenoptera bonaerensis (Antarctic minke whale).